Consider the following 202-residue polypeptide: Recoverin (202 aa).

Gly2 carries the N-myristoyl glycine lipid modification. Position 39 is a cysteine sulfenic acid (-SOH) (Cys39). 4 EF-hand domains span residues 41–59 (SGRITKQEFQSIYSKFFPE), 61–96 (DPKAYAQHVFRSFDANSDGTLDFKEYVIALHMTSAG), 97–132 (KTNQKLEWAFSLYDVDGNGAISKSEVLEIVMAIFKM), and 147–182 (TPEKRAEKIWGFFGKKDDDKLTEEEFIEGTLANKEI). Ca(2+) contacts are provided by Asp74, Asn76, Asp78, Thr80, Glu85, Asp110, Asp112, Asn114, and Glu121. Residues 189-192 (EPRK) are interaction with GRK1.

The protein belongs to the recoverin family. In terms of assembly, homodimer; disulfide-linked. Homodimerization is caused by prolonged intense illumination. May form a complex composed of RHO, GRK1 and RCVRN in a Ca(2+)-dependent manner; RCVRN prevents the interaction between GRK1 and RHO. Interacts (via C-terminus) with GRK1 (via N-terminus); the interaction is Ca(2+)-dependent. Post-translationally, the N-terminal glycine is linked to one of four different types of acyl groups. The most abundant is myristoleate (14:1), but 14:0, 14:2, and 12:0 acyl residues are also present. The Ca(2+) induced exposure of the myristoyl group, known as the calcium-myristoyl switch, promotes RCVRN binding to the photoreceptor cell membranes only when intracellular Ca(2+) concentration is high. Oxidation on Cys-39 occurs in response to prolonged intense illumination and results in the formation of disulfide homodimers, and to a lesser extent disulfide-linked heterodimers.

The protein resides in the photoreceptor inner segment. The protein localises to the cell projection. Its subcellular location is the cilium. It localises to the photoreceptor outer segment. It is found in the photoreceptor outer segment membrane. The protein resides in the perikaryon. Acts as a calcium sensor and regulates phototransduction of cone and rod photoreceptor cells. Modulates light sensitivity of cone photoreceptor in dark and dim conditions. In response to high Ca(2+) levels induced by low light levels, prolongs RHO/rhodopsin activation in rod photoreceptor cells by binding to and inhibiting GRK1-mediated phosphorylation of RHO/rhodopsin. Plays a role in scotopic vision/enhances vision in dim light by enhancing signal transfer between rod photoreceptors and rod bipolar cells. Improves rod photoreceptor sensitivity in dim light and mediates response of rod photoreceptors to facilitate detection of change and motion in bright light. This Canis lupus familiaris (Dog) protein is Recoverin (RCVRN).